We begin with the raw amino-acid sequence, 496 residues long: Gasdermin-E (496 aa).

A membrane targeting domain region spans residues 1 to 56; that stretch reads MFAKATRNFLREVDADGDLIAVSNLNDSDKLQLLSLVTKKKRFWCWQRPKYQFLSL. The residue at position 45 (Cys45) is an S-(2-succinyl)cysteine. Lys120 participates in a covalent cross-link: Glycyl lysine isopeptide (Lys-Gly) (interchain with G-Cter in ubiquitin). An S-(2-succinyl)cysteine mark is found at Cys156, Cys168, and Cys180. A Glycyl lysine isopeptide (Lys-Gly) (interchain with G-Cter in ubiquitin) cross-link involves residue Lys189. Cys235, Cys371, Cys408, Cys417, and Cys489 each carry S-(2-succinyl)cysteine.

The protein belongs to the gasdermin family. Homooligomer; homooligomeric ring-shaped pore complex containing 27-28 subunits when inserted in the membrane. In terms of processing, cleavage at Asp-270 by CASP3 (mature and uncleaved precursor forms) or granzyme B (GZMB) relieves autoinhibition and is sufficient to initiate pyroptosis. Succination by the Krebs cycle intermediate fumarate, which leads to S-(2-succinyl)cysteine residues, inhibits processing by caspases, and ability to initiate pyroptosis. Succination modification is catalyzed by a non-enzymatic reaction caused by an accumulation of fumarate. Post-translationally, ubiquitinated at Lys-120 and Lys-189 via 'Lys-48'-linked polyubiquitin chains, leading to proteasomal degradation. Deubiquitinated by USP48, leading to increased stability. In terms of processing, palmitoylated. Expressed in cochlea. Low level of expression in heart, brain, placenta, lung, liver, skeletal muscle, kidney and pancreas, with highest expression in placenta.

Its subcellular location is the cell membrane. The protein localises to the cytoplasm. It localises to the cytosol. Its activity is regulated as follows. The full-length protein before cleavage is inactive: intramolecular interactions between N- and C-terminal domains mediate autoinhibition in the absence of activation signal. The intrinsic pyroptosis-inducing activity is carried by the released N-terminal moiety (Gasdermin-E, N-terminal) following cleavage by CASP3 or granzyme B (GZMB). Activated by NLRP1 in the absence of GSDMD expression: NLRP1 cleaves and activates CASP8, promoting downstream activation of CASP3 and subsequent activation of GSDME. (Microbial infection) Activated upon human coronavirus SARS-CoV-2 infection, leading to lung epithelial cell death. Activation takes place in response to (1) activation of NLRP1 and (2) inactivation of GSDMD following NLRP1 and GSDMD cleavage by the SARS-CoV-2 3C-like proteinase nsp5. Its function is as follows. Precursor of a pore-forming protein that converts non-inflammatory apoptosis to pyroptosis. This form constitutes the precursor of the pore-forming protein: upon cleavage, the released N-terminal moiety (Gasdermin-E, N-terminal) binds to membranes and forms pores, triggering pyroptosis. In terms of biological role, pore-forming protein produced by cleavage by CASP3 or granzyme B (GZMB), which converts non-inflammatory apoptosis to pyroptosis or promotes granzyme-mediated pyroptosis, respectively. After cleavage, moves to the plasma membrane, homooligomerizes within the membrane and forms pores of 10-15 nanometers (nm) of inner diameter, allowing the release of mature interleukins (IL1B and IL16) and triggering pyroptosis. Binds to inner leaflet lipids, bisphosphorylated phosphatidylinositols, such as phosphatidylinositol (4,5)-bisphosphate. Cleavage by CASP3 switches CASP3-mediated apoptosis induced by TNF or danger signals, such as chemotherapy drugs, to pyroptosis. Mediates secondary necrosis downstream of the mitochondrial apoptotic pathway and CASP3 activation as well as in response to viral agents. Exhibits bactericidal activity. Cleavage by GZMB promotes tumor suppressor activity by triggering robust anti-tumor immunity. Suppresses tumors by mediating granzyme-mediated pyroptosis in target cells of natural killer (NK) cells: cleavage by granzyme B (GZMB), delivered to target cells from NK-cells, triggers pyroptosis of tumor cells and tumor suppression. May play a role in the p53/TP53-regulated cellular response to DNA damage. (Microbial infection) Pore-forming protein, which promotes maternal placental pyroptosis in response to Zika virus infection, contributing to adverse fetal outcomes. The sequence is that of Gasdermin-E from Homo sapiens (Human).